Consider the following 371-residue polypeptide: UDP-N-acetylglucosamine--N-acetylmuramyl-(pentapeptide) pyrophosphoryl-undecaprenol N-acetylglucosamine transferase (371 aa).

UDP-N-acetyl-alpha-D-glucosamine-binding positions include 15–17 (TGG), N126, R172, S199, I256, 275–280 (ALTVSE), and Q301.

It belongs to the glycosyltransferase 28 family. MurG subfamily.

The protein localises to the cell inner membrane. It carries out the reaction di-trans,octa-cis-undecaprenyl diphospho-N-acetyl-alpha-D-muramoyl-L-alanyl-D-glutamyl-meso-2,6-diaminopimeloyl-D-alanyl-D-alanine + UDP-N-acetyl-alpha-D-glucosamine = di-trans,octa-cis-undecaprenyl diphospho-[N-acetyl-alpha-D-glucosaminyl-(1-&gt;4)]-N-acetyl-alpha-D-muramoyl-L-alanyl-D-glutamyl-meso-2,6-diaminopimeloyl-D-alanyl-D-alanine + UDP + H(+). It functions in the pathway cell wall biogenesis; peptidoglycan biosynthesis. Its function is as follows. Cell wall formation. Catalyzes the transfer of a GlcNAc subunit on undecaprenyl-pyrophosphoryl-MurNAc-pentapeptide (lipid intermediate I) to form undecaprenyl-pyrophosphoryl-MurNAc-(pentapeptide)GlcNAc (lipid intermediate II). The protein is UDP-N-acetylglucosamine--N-acetylmuramyl-(pentapeptide) pyrophosphoryl-undecaprenol N-acetylglucosamine transferase of Francisella tularensis subsp. tularensis (strain FSC 198).